A 122-amino-acid chain; its full sequence is Large ribosomal subunit protein bL12 (122 aa).

It belongs to the bacterial ribosomal protein bL12 family. In terms of assembly, homodimer. Part of the ribosomal stalk of the 50S ribosomal subunit. Forms a multimeric L10(L12)X complex, where L10 forms an elongated spine to which 2 to 4 L12 dimers bind in a sequential fashion. Binds GTP-bound translation factors.

Its function is as follows. Forms part of the ribosomal stalk which helps the ribosome interact with GTP-bound translation factors. Is thus essential for accurate translation. The sequence is that of Large ribosomal subunit protein bL12 from Mycoplasma pneumoniae (strain ATCC 29342 / M129 / Subtype 1) (Mycoplasmoides pneumoniae).